The primary structure comprises 253 residues: HTH-type transcriptional regulator AdiY (253 aa).

Residues 149 to 246 (DSVYQIIESD…GMTPLHYVSQ (98 aa)) enclose the HTH araC/xylS-type domain. 2 consecutive DNA-binding regions (H-T-H motif) follow at residues 166–187 (SMVA…KSEN) and 213–236 (ISQV…KDFY).

This chain is HTH-type transcriptional regulator AdiY (adiY), found in Escherichia coli (strain K12).